Consider the following 137-residue polypeptide: Cell division protein SepF (137 aa).

This sequence belongs to the SepF family. As to quaternary structure, homodimer. Interacts with FtsZ.

It is found in the cytoplasm. In terms of biological role, cell division protein that is part of the divisome complex and is recruited early to the Z-ring. Probably stimulates Z-ring formation, perhaps through the cross-linking of FtsZ protofilaments. Its function overlaps with FtsA. This Carboxydothermus hydrogenoformans (strain ATCC BAA-161 / DSM 6008 / Z-2901) protein is Cell division protein SepF.